A 576-amino-acid chain; its full sequence is MGAVGVEAGVFDTVDGLVGEVMRLHRSLPARPAVEEVEAAEALAAAADREERARADAVARLRRSPAVPDELLCVAQEMHRALAGFQCREQKRDAARLLELEALHTLFDDLIQRASQCLPSTSTRAAPRIAAPAAATTTTSTAAAGSSSSSAVGNAERHASSGTNGFTASRVAGTSTSTGRVSMDDSYVRKAKAAMWDGGAAATNSHLPRGPVEANSVAVRADGNYGDDNEKLSLIKLASMIEVSAKKGARDLNLQGKLMAQIEWLPDSIGKLTGLVTLDISENRLLALPDAIGKLFSLAKLDIHANRISQLPESIGDLRSLIYLNMRGNQLSSLPSSIGRLLNLEELDVGSNGLSSLPDSIGSLTRLKKLIVETNDLDELPYTIGHCVSLVELQAGYNHLKALPEAVGKLEPLEILSVRYNNLRSLPTTMASLTKLKEVDVSFNELESIPENFCFATSLIKLNVGNNFADLQYLPRSIGNLEMLEELDMSNNQIRVLPDSFGNLKHLRVLRAEENPLQVPPRDIALKGAQAVVQYMSDASKRTTKSEPMKPKKTWVHFCFFSRPNKRKHDRIDNAT.

The segment covering 130-151 (AAPAAATTTTSTAAAGSSSSSA) has biased composition (low complexity). The interval 130 to 181 (AAPAAATTTTSTAAAGSSSSSAVGNAERHASSGTNGFTASRVAGTSTSTGRV) is disordered. Over residues 160-180 (SSGTNGFTASRVAGTSTSTGR) the composition is skewed to polar residues. LRR repeat units follow at residues 272 to 295 (LTGLVTLDISENRLLALPDAIGKL), 296 to 318 (FSLAKLDIHANRISQLPESIGDL), 320 to 341 (SLIYLNMRGNQLSSLPSSIGRL), 342 to 364 (LNLEELDVGSNGLSSLPDSIGSL), 366 to 387 (RLKKLIVETNDLDELPYTIGHC), 389 to 410 (SLVELQAGYNHLKALPEAVGKL), 411 to 433 (EPLEILSVRYNNLRSLPTTMASL), 434 to 456 (TKLKEVDVSFNELESIPENFCFA), 458 to 481 (SLIKLNVGNNFADLQYLPRSIGNL), 482 to 503 (EMLEELDMSNNQIRVLPDSFGN), and 505 to 527 (KHLRVLRAEENPLQVPPRDIALK). Positions 528-535 (GAQAVVQY) match the GVYW; degenerate motif.

This sequence belongs to the SHOC2 family. As to expression, widely expressed.

In terms of biological role, leucine-rich repeat protein that likely mediates protein interactions, possibly in the context of signal transduction. The chain is Plant intracellular Ras-group-related LRR protein 4 (IRL4) from Oryza sativa subsp. japonica (Rice).